A 410-amino-acid chain; its full sequence is Lysosome-associated membrane glycoprotein 2 (410 aa).

An N-terminal signal peptide occupies residues 1-28; it reads MVCFRLFPVPGSGLVLVCLVLGAVRSYA. The tract at residues 29 to 192 is first lumenal domain; the sequence is LELNLTDSEN…STNEFLCDKD (164 aa). The Lumenal segment spans residues 29 to 375; it reads LELNLTDSEN…QDCSADDDNF (347 aa). 2 N-linked (GlcNAc...) (polylactosaminoglycan) asparagine glycosylation sites follow: Asn-32 and Asn-38. Residues Cys-41 and Cys-79 are joined by a disulfide bond. N-linked (GlcNAc...) asparagine glycosylation is found at Asn-49, Asn-58, Asn-75, Asn-101, Asn-123, and Asn-179. The cysteines at positions 153 and 189 are disulfide-linked. Residues 193–228 are hinge; sequence KTSTVAPTIHTTVPSPTTTPTPKEKPEAGTYSVNNG. O-linked (GalNAc...) serine glycosylation is present at Ser-195. O-linked (GalNAc...) threonine glycans are attached at residues Thr-196, Thr-200, Thr-203, and Thr-204. The span at 199–213 shows a compositional bias: low complexity; it reads PTIHTTVPSPTTTPT. Residues 199-221 form a disordered region; sequence PTIHTTVPSPTTTPTPKEKPEAG. The O-linked (GalNAc...) serine; partial glycan is linked to Ser-207. A glycan (O-linked (GalNAc...) threonine; partial) is linked at Thr-209. O-linked (GalNAc...) threonine glycosylation is found at Thr-210 and Thr-211. Thr-213 carries O-linked (GalNAc...) threonine; partial glycosylation. N-linked (GlcNAc...) asparagine glycans are attached at residues Asn-229, Asn-242, Asn-257, Asn-275, and Asn-300. A second lumenal domain region spans residues 229–375; it reads NDTCLLATMG…QDCSADDDNF (147 aa). An intrachain disulfide couples Cys-232 to Cys-265. Residue Asn-307 is glycosylated (N-linked (GlcNAc...) (polylactosaminoglycan) asparagine). 2 N-linked (GlcNAc...) asparagine glycosylation sites follow: Asn-317 and Asn-356. Cysteines 331 and 368 form a disulfide. The chain crosses the membrane as a helical span at residues 376-399; that stretch reads LVPIAVGAALAGVLILVLLAYFIG. The Cytoplasmic segment spans residues 400 to 410; sequence LKHHHAGYEQF. Residues 401–404 form an important for binding and subsequent lysosomal degradation of target proteins region; that stretch reads KHHH.

The protein belongs to the LAMP family. As to quaternary structure, monomer. Homodimer. Homotrimer. Forms large homooligomers. Interacts (via its cytoplasmic region) with HSPA8; HSPA8 mediates recruitment of proteins with a KFERQ motif to the surface of the lysosome for chaperone-mediated autophagy. Interacts with HSP90 in the lysosome lumen; this enhances LAMP2 stability. Interacts with MLLT11. Interacts with ABCB9. Interacts with FURIN. Interacts with CT55; this interaction may be important for LAMP2 protein stability. Interacts with TMEM175; inhibiting the proton channel activity of TMEM175. Forms a ternary complex with RAB7A and RUFY4 (via RUN domain); the interaction with RAB7A is mediated by RUFY4 (via RUN and coiled coil domains). (Microbial infection) Interacts with mumps virus protein F; this interaction promotes protein F cleavage by FURIN. Post-translationally, O- and N-glycosylated; some of the 16 N-linked glycans are polylactosaminoglycans. In terms of tissue distribution, isoform LAMP-2A is highly expressed in placenta, lung and liver, less in kidney and pancreas, low in brain and skeletal muscle. Isoform LAMP-2B is detected in spleen, thymus, prostate, testis, small intestine, colon, skeletal muscle, brain, placenta, lung, kidney, ovary and pancreas and liver. Isoform LAMP-2C is detected in small intestine, colon, heart, brain, skeletal muscle, and at lower levels in kidney and placenta.

The protein localises to the lysosome membrane. It is found in the endosome membrane. The protein resides in the cell membrane. It localises to the cytoplasmic vesicle. Its subcellular location is the autophagosome membrane. Lysosomal membrane glycoprotein which plays an important role in lysosome biogenesis, lysosomal pH regulation and autophagy. Acts as an important regulator of lysosomal lumen pH regulation by acting as a direct inhibitor of the proton channel TMEM175, facilitating lysosomal acidification for optimal hydrolase activity. Plays an important role in chaperone-mediated autophagy, a process that mediates lysosomal degradation of proteins in response to various stresses and as part of the normal turnover of proteins with a long biological half-live. Functions by binding target proteins, such as GAPDH, NLRP3 and MLLT11, and targeting them for lysosomal degradation. In the chaperone-mediated autophagy, acts downstream of chaperones, such as HSPA8/HSC70, which recognize and bind substrate proteins and mediate their recruitment to lysosomes, where target proteins bind LAMP2. Plays a role in lysosomal protein degradation in response to starvation. Required for the fusion of autophagosomes with lysosomes during autophagy. Cells that lack LAMP2 express normal levels of VAMP8, but fail to accumulate STX17 on autophagosomes, which is the most likely explanation for the lack of fusion between autophagosomes and lysosomes. Required for normal degradation of the contents of autophagosomes. Required for efficient MHC class II-mediated presentation of exogenous antigens via its function in lysosomal protein degradation; antigenic peptides generated by proteases in the endosomal/lysosomal compartment are captured by nascent MHC II subunits. Is not required for efficient MHC class II-mediated presentation of endogenous antigens. Functionally, modulates chaperone-mediated autophagy. Decreases presentation of endogenous antigens by MHCII. Does not play a role in the presentation of exogenous and membrane-derived antigens by MHCII. Its function is as follows. (Microbial infection) Supports the FURIN-mediated cleavage of mumps virus fusion protein F by interacting with both FURIN and the unprocessed form but not the processed form of the viral protein F. The sequence is that of Lysosome-associated membrane glycoprotein 2 (LAMP2) from Homo sapiens (Human).